Reading from the N-terminus, the 417-residue chain is Probable serine incorporator (417 aa).

The next 10 helical transmembrane spans lie at 25–45 (VYVV…YWTF), 69–89 (VVYR…LVMI), 104–124 (GYWP…FFIP), 131–151 (YTWI…VLLI), 180–200 (CVLS…MLVF), 208–228 (INQF…VLSI), 239–259 (SGLF…YSAI), 276–296 (KEST…YSAF), 339–359 (FFHF…TNWA), and 391–411 (VVSS…PILL).

This sequence belongs to the TDE1 family.

Its subcellular location is the endoplasmic reticulum membrane. Functionally, enhances the incorporation of serine into phosphatidylserine and sphingolipids. In Dictyostelium discoideum (Social amoeba), this protein is Probable serine incorporator (serinc).